Consider the following 619-residue polypeptide: Mitogen-activated protein kinase kinase kinase 2 (619 aa).

The interval 25-45 (LSLQETRKAKSSSPKKQNDVR) is disordered. Phosphoserine is present on serine 26. The PB1 domain maps to 43–122 (DVRVKFEHRG…KSLKILLVIN (80 aa)). Serine 153, serine 159, and serine 164 each carry phosphoserine. Disordered stretches follow at residues 154 to 173 (IIGP…IPDE), 201 to 248 (LDPL…QEFS), and 289 to 355 (RTQG…APTN). The segment covering 203–219 (PLSLSSPENSGSGSCPS) has biased composition (low complexity). Residues serine 239, serine 297, serine 311, serine 331, serine 344, and serine 349 each carry the phosphoserine modification. The segment covering 290-299 (TQGTSLRSPV) has biased composition (polar residues). The segment covering 300–315 (SFSPTDHSLSTSSGSS) has biased composition (low complexity). The span at 322-332 (DDSRIRRRGSD) shows a compositional bias: basic and acidic residues. The 261-residue stretch at 357–617 (RLGKLLGQGA…DELLRHMFVH (261 aa)) folds into the Protein kinase domain. Residues 362–371 (LGQGAFGRVY) and lysine 385 contribute to the ATP site. The active-site Proton acceptor is the aspartate 483.

Belongs to the protein kinase superfamily. STE Ser/Thr protein kinase family. MAP kinase kinase kinase subfamily. In terms of assembly, interacts with PKN2; the interaction activates PKN2 kinase activity in a MAP3K2-independent kinase activity. Self-associates. Binds both upstream activators and downstream substrates in multimolecular complexes. Interacts (via the kinase catalytic domain) with STK38. Interacts with XIAP/BIRC4. Mg(2+) serves as cofactor. In terms of processing, autophosphorylated. Ubiquitination by XIAP/BIRC4 does not lead to proteasomal degradation.

It is found in the cytoplasm. The protein localises to the nucleus. It catalyses the reaction L-seryl-[protein] + ATP = O-phospho-L-seryl-[protein] + ADP + H(+). The catalysed reaction is L-threonyl-[protein] + ATP = O-phospho-L-threonyl-[protein] + ADP + H(+). Activated by phosphorylation on Thr-524. In terms of biological role, component of a protein kinase signal transduction cascade. Regulates the JNK and ERK5 pathways by phosphorylating and activating MAP2K5 and MAP2K7. Plays a role in caveolae kiss-and-run dynamics. This is Mitogen-activated protein kinase kinase kinase 2 (MAP3K2) from Homo sapiens (Human).